A 464-amino-acid chain; its full sequence is Argininosuccinate lyase (464 aa).

The protein belongs to the lyase 1 family. Argininosuccinate lyase subfamily.

Its subcellular location is the cytoplasm. The catalysed reaction is 2-(N(omega)-L-arginino)succinate = fumarate + L-arginine. It functions in the pathway amino-acid biosynthesis; L-arginine biosynthesis; L-arginine from L-ornithine and carbamoyl phosphate: step 3/3. The polypeptide is Argininosuccinate lyase (Pseudomonas putida (strain GB-1)).